A 467-amino-acid chain; its full sequence is Mothers against decapentaplegic homolog 2 (467 aa).

At serine 2 the chain carries N-acetylserine. Threonine 8 bears the Phosphothreonine mark. An MH1 domain is found at 10 to 176 (PVVKRLLGWK…YQRVETPVLP (167 aa)). Lysine 19 carries the N6-acetyllysine modification. Residues cysteine 74, cysteine 149, cysteine 161, and histidine 166 each contribute to the Zn(2+) site. Residues 207–217 (PAGIEPQSNYI) show a composition bias toward polar residues. The interval 207 to 251 (PAGIEPQSNYIPETPPPGYISEDGETSDQQLNQSMDTGSPAELSP) is disordered. Threonine 220 bears the Phosphothreonine mark. Residues 221-225 (PPPGY) carry the PY-motif motif. A compositionally biased stretch (polar residues) spans 233 to 243 (SDQQLNQSMDT). The residue at position 240 (serine 240) is a Phosphoserine; by CAMK2. Serine 245, serine 250, serine 255, serine 458, serine 460, and serine 464 each carry phosphoserine. In terms of domain architecture, MH2 spans 274–467 (WCSIAYYELN…SPSVRCSSMS (194 aa)). Phosphoserine; by TGFBR1 occurs at positions 465 and 467.

This sequence belongs to the dwarfin/SMAD family. In terms of assembly, monomer; in the absence of TGF-beta. Heterodimer; in the presence of TGF-beta. Forms a heterodimer with co-SMAD, SMAD4, in the nucleus to form the transactivation complex SMAD2/SMAD4. Found in a complex with SMAD3 and TRIM33 upon addition of TGF-beta. Identified in a complex that contains at least ZNF451, SMAD2, SMAD3 and SMAD4. Interacts (via the MH2 domain) with ZFYVE9; may form trimers with the SMAD4 co-SMAD. Interacts with TAZ/WWRT1. Interacts with FOXH1. Interacts with SNW1. Interacts with CREB-binding protein (CBP) and EP300. Interacts with SNON. Interacts with ALK4/ACVR1B. Interacts with SKOR1. Interacts with SKOR2. Interacts with PRDM16. Interacts (via MH2 domain) with LEMD3. Interacts with RBPMS. Interacts with WWP1. Interacts (dephosphorylated form, via the MH1 and MH2 domains) with RANBP3 (via its C-terminal R domain); the interaction results in the export of dephosphorylated SMAD3 out of the nucleus and termination of the TGF-beta signaling. Interacts with PDPK1 (via PH domain). Interacts with DAB2; the interactions are enhanced upon TGF-beta stimulation. Interacts with USP15. Interacts with PPP5C. Interacts with LDLRAD4 (via the SMAD interaction motif). Interacts (via MH2 domain) with PMEPA1 (via the SMAD interaction motif). Interacts with ZFHX3. Interacts with ZNF451. Interacts with SMURF2 when phosphorylated on Ser-465/467. Interacts with PPM1A. Interacts with TGF-beta. Interacts with TGFBR1. Interacts with TGIF. Interacts with SMAD3 and TRIM33. Interacts with ZNF580. Interacts with NEDD4L in response to TGF-beta. Interacts with HGS. Interacts with AIP1. Interacts with WWP1. Interacts with PML. Interacts weakly with ZNF8. Interacts (when phosphorylated) with RNF111; RNF111 acts as an enhancer of the transcriptional responses by mediating ubiquitination and degradation of SMAD2 inhibitors. Interacts with YAP1 (when phosphorylated at 'Ser-55'). Interacts when phosphorylated with IPO7; the interaction facilitates translocation of SMAD2 to the nucleus. Interacts with MTMR4; negatively regulates TGF-beta signaling through SMAD2 dephosphorylation and retention in endosomes. Post-translationally, in response to TGF-beta, phosphorylated on the C-terminal SXS motif by TGF-beta and activin type 1 receptor kinases, phosphorylation declines progressively in a KMT5A-dependent manner. Phosphorylation in this motif is required for interaction with a number of proteins including SMURF2, SNON and SMAD4 in response to TGF-beta. Dephosphorylated in this motif by PPM1A leading to disruption of the SMAD2/3-SMAD4 complex, nuclear export and termination of the TGF-beta signaling. In response to decorin, the naturally occurring inhibitor of TGF-beta signaling, phosphorylated on Ser-240 by CaMK2. Phosphorylated by MAPK3 upon EGF stimulation; which increases transcriptional activity and stability, and is blocked by calmodulin. Phosphorylated by PDPK1. Acetylated on Lys-19 by coactivators in response to TGF-beta signaling, which increases transcriptional activity. In terms of processing, in response to TGF-beta, ubiquitinated by NEDD4L; which promotes its degradation. Monoubiquitinated, leading to prevent DNA-binding. Deubiquitination by USP15 alleviates inhibition and promotes activation of TGF-beta target genes. Ubiquitinated by RNF111, leading to its degradation: only SMAD2 proteins that are 'in use' are targeted by RNF111, RNF111 playing a key role in activating SMAD2 and regulating its turnover.

The protein localises to the cytoplasm. It is found in the nucleus. Its function is as follows. Receptor-regulated SMAD (R-SMAD) that is an intracellular signal transducer and transcriptional modulator activated by TGF-beta (transforming growth factor) and activin type 1 receptor kinases. Binds the TRE element in the promoter region of many genes that are regulated by TGF-beta and, on formation of the SMAD2/SMAD4 complex, activates transcription. Promotes TGFB1-mediated transcription of odontoblastic differentiation genes in dental papilla cells. Positively regulates PDPK1 kinase activity by stimulating its dissociation from the 14-3-3 protein YWHAQ which acts as a negative regulator. This is Mothers against decapentaplegic homolog 2 (SMAD2) from Bos taurus (Bovine).